We begin with the raw amino-acid sequence, 101 residues long: Venom protein 214 (101 aa).

A signal peptide spans 1-16 (MIRYVLVIITCFLVAA).

In terms of processing, contains 3 disulfide bonds. As to expression, expressed by the venom gland.

It localises to the secreted. This is Venom protein 214 from Lychas mucronatus (Chinese swimming scorpion).